We begin with the raw amino-acid sequence, 296 residues long: Maltose/maltodextrin transport system permease protein MalG (296 aa).

Over Met-1–Arg-12 the chain is Cytoplasmic. The helical transmembrane segment at Leu-13–Ile-35 threads the bilayer. Residues Ala-36–Ser-88 are Periplasmic-facing. The 197-residue stretch at Leu-85 to Ala-281 folds into the ABC transmembrane type-1 domain. The helical transmembrane segment at Val-89–Ala-111 threads the bilayer. Topologically, residues Arg-112–Lys-123 are cytoplasmic. Residues Gly-124–Leu-143 form a helical membrane-spanning segment. At Phe-144–Pro-152 the chain is on the periplasmic side. A helical transmembrane segment spans residues Phe-153 to Trp-175. Residues Thr-176–Arg-204 are Cytoplasmic-facing. A helical transmembrane segment spans residues Leu-205–Ile-227. The Periplasmic portion of the chain corresponds to Thr-228–Asn-257. A helical transmembrane segment spans residues Tyr-258 to Leu-280. Over Ala-281–Gly-296 the chain is Cytoplasmic.

It belongs to the binding-protein-dependent transport system permease family. MalFG subfamily. The complex is composed of two ATP-binding proteins (MalK), two transmembrane proteins (MalG and MalF) and a solute-binding protein (MalE).

The protein resides in the cell inner membrane. Part of the ABC transporter complex MalEFGK involved in maltose/maltodextrin import. Probably responsible for the translocation of the substrate across the membrane. This chain is Maltose/maltodextrin transport system permease protein MalG (malG), found in Salmonella typhimurium (strain LT2 / SGSC1412 / ATCC 700720).